A 111-amino-acid polypeptide reads, in one-letter code: Beta-defensin 126 (111 aa).

An N-terminal signal peptide occupies residues 1-20; that stretch reads MKSLLFTLAVFMLLAQLVSG. The interval 21–63 is in vitro binds to LPS, mediates antimicrobial activity and inhibits LPS-mediated inflammation; it reads NWYVKKCLNDVGICKKKCKPEEMHVKNGWAMCGKQRDCCVPAD. Intrachain disulfides connect cysteine 27/cysteine 58, cysteine 34/cysteine 52, and cysteine 38/cysteine 59.

This sequence belongs to the beta-defensin family. Homodimer or homooligomer; disulfide-linked. In terms of processing, O-glycosylated; glycans contain alpha(2,3)-linked sialic acids.

The protein resides in the secreted. In terms of biological role, highly glycosylated atypical beta-defensin involved in several aspects of sperm function. Facilitates sperm transport in the female reproductive tract and contributes to sperm protection against immunodetection; both functions are probably implicating the negative surface charge provided by its O-linked oligosaccharides in the sperm glycocalyx. Involved in binding of sperm to oviductal epithelial cells to form a sperm reservoir until ovulation. Release from the sperm surface during capacitation and ovaluation by an elevation of oviductal fluid pH is unmasking other surface components and allows sperm to penetrate the cumulus matrix and bind to the zona pellucida of the oocyte. In vitro has antimicrobial activity and may inhibit LPS-mediated inflammation. The chain is Beta-defensin 126 (DEFB126) from Gorilla gorilla gorilla (Western lowland gorilla).